The primary structure comprises 394 residues: Bifunctional enzyme Fae/Hps (394 aa).

The interval 1-162 is formaldehyde-activating enzyme; sequence MEFRIGEALI…YEKDRSFHPF (162 aa). Residue His-18 is the Proton donor of the active site. Substrate-binding residues include Asp-20, Leu-49, Lys-67, Thr-69, and Gln-84. The interval 163–394 is 3-hexulose-6-phosphate synthase; sequence VGRKLTKLWD…TDQFRIMTDF (232 aa).

The protein in the N-terminal section; belongs to the formaldehyde-activating enzyme family. This sequence in the C-terminal section; belongs to the HPS/KGPDC family. HPS subfamily.

It carries out the reaction 5,6,7,8-tetrahydromethanopterin + formaldehyde = 5,10-methylenetetrahydromethanopterin + H2O. It catalyses the reaction D-ribulose 5-phosphate + formaldehyde = D-arabino-hex-3-ulose 6-phosphate. The protein operates within carbohydrate biosynthesis; D-ribose 5-phosphate biosynthesis. In terms of biological role, catalyzes the condensation of formaldehyde with tetrahydromethanopterin (H(4)MPT) to 5,10-methylenetetrahydromethanopterin. Its function is as follows. Catalyzes the reversible formation of ribulose-5-phosphate and formaldehyde from 3-hexulose-6-phosphate. In Archaeoglobus fulgidus (strain ATCC 49558 / DSM 4304 / JCM 9628 / NBRC 100126 / VC-16), this protein is Bifunctional enzyme Fae/Hps.